The primary structure comprises 526 residues: Cytochrome P450 monooxygenase 253 (526 aa).

Helical transmembrane passes span 13 to 33 (IASS…LLLI), 115 to 135 (FIMA…GYGK), and 306 to 326 (IGAG…AMTL). Residue Cys451 participates in heme binding.

This sequence belongs to the cytochrome P450 family. The cofactor is heme.

The protein resides in the membrane. Its pathway is secondary metabolite biosynthesis. Functionally, cytochrome P450 monooxygenase that is able to use delta(6)-protoilludene as a substrate to produce delta(6)-protoilludene-8-ol. In Postia placenta (strain ATCC 44394 / Madison 698-R) (Brown rot fungus), this protein is Cytochrome P450 monooxygenase 253.